Consider the following 311-residue polypeptide: Porphobilinogen deaminase (311 aa).

S-(dipyrrolylmethanemethyl)cysteine is present on Cys-243.

This sequence belongs to the HMBS family. Monomer. Requires dipyrromethane as cofactor.

It catalyses the reaction 4 porphobilinogen + H2O = hydroxymethylbilane + 4 NH4(+). The protein operates within porphyrin-containing compound metabolism; protoporphyrin-IX biosynthesis; coproporphyrinogen-III from 5-aminolevulinate: step 2/4. Functionally, tetrapolymerization of the monopyrrole PBG into the hydroxymethylbilane pre-uroporphyrinogen in several discrete steps. This chain is Porphobilinogen deaminase, found in Aliivibrio salmonicida (strain LFI1238) (Vibrio salmonicida (strain LFI1238)).